Consider the following 396-residue polypeptide: Phosphoglycerate kinase (396 aa).

Substrate contacts are provided by residues 21–23 (DFN), Arg36, 59–62 (HFDR), Arg118, and Arg151. Residues Lys201, Glu323, and 353–356 (GGDT) contribute to the ATP site.

It belongs to the phosphoglycerate kinase family. In terms of assembly, monomer.

It is found in the cytoplasm. It carries out the reaction (2R)-3-phosphoglycerate + ATP = (2R)-3-phospho-glyceroyl phosphate + ADP. It functions in the pathway carbohydrate degradation; glycolysis; pyruvate from D-glyceraldehyde 3-phosphate: step 2/5. The polypeptide is Phosphoglycerate kinase (Caulobacter sp. (strain K31)).